A 306-amino-acid polypeptide reads, in one-letter code: Glutathione transport system permease protein GsiC (306 aa).

Residues 1 to 8 are Cytoplasmic-facing; the sequence is MLNYFIKR. A helical membrane pass occupies residues 9–29; the sequence is LLGLIPTLLIVMVLVFLFVHL. Topologically, residues 30–98 are periplasmic; the sequence is LPGDPARLAA…QEIALRFMPT (69 aa). The ABC transmembrane type-1 domain maps to 95–292; that stretch reads FMPTFWLTVC…LEFILINLLV (198 aa). The helical transmembrane segment at 99-119 threads the bilayer; that stretch reads FWLTVCSMAWAVIFGMAIGIV. The Cytoplasmic segment spans residues 120-130; it reads SAVWRNGWPDR. Residues 131-151 form a helical membrane-spanning segment; sequence IGMTLAVSGLSFPAFALGMLL. At 152–168 the chain is on the periplasmic side; the sequence is MQIFSVELGWLPTVGAD. Residues 169–189 traverse the membrane as a helical segment; that stretch reads TWLHYILPSLTLGAAVAAVMA. Topologically, residues 190 to 228 are cytoplasmic; that stretch reads RFTRASFVDVLQEDYMRTARAKGVRESLVVLKHGLRNAL. A helical membrane pass occupies residues 229-249; it reads IPVVTMMGLQFGFLLGGSIVV. Over 250-278 the chain is Periplasmic; that stretch reads EKVFNWPGLGRLLVDSVEMRDYPVIQAEV. A helical membrane pass occupies residues 279 to 299; that stretch reads LLFSLEFILINLLVDMLYAAI. Over 300-306 the chain is Cytoplasmic; sequence NPAIRYK.

It belongs to the binding-protein-dependent transport system permease family. The complex is composed of two ATP-binding proteins (GsiA), two transmembrane proteins (GsiC and GsiD) and a solute-binding protein (GsiB).

The protein resides in the cell inner membrane. In terms of biological role, part of the ABC transporter complex GsiABCD involved in glutathione import. Probably responsible for the translocation of the substrate across the membrane. In Pectobacterium atrosepticum (strain SCRI 1043 / ATCC BAA-672) (Erwinia carotovora subsp. atroseptica), this protein is Glutathione transport system permease protein GsiC.